The sequence spans 58 residues: Large ribosomal subunit protein uL30 (58 aa).

Belongs to the universal ribosomal protein uL30 family. In terms of assembly, part of the 50S ribosomal subunit.

The protein is Large ribosomal subunit protein uL30 of Pseudomonas putida (strain W619).